The chain runs to 225 residues: Uracil-DNA glycosylase 1 (225 aa).

Catalysis depends on Asp68, which acts as the Proton acceptor.

This sequence belongs to the uracil-DNA glycosylase (UDG) superfamily. UNG family.

Its subcellular location is the cytoplasm. It catalyses the reaction Hydrolyzes single-stranded DNA or mismatched double-stranded DNA and polynucleotides, releasing free uracil.. In terms of biological role, excises uracil residues from the DNA which can arise as a result of misincorporation of dUMP residues by DNA polymerase or due to deamination of cytosine. The polypeptide is Uracil-DNA glycosylase 1 (ung1) (Streptomyces avermitilis (strain ATCC 31267 / DSM 46492 / JCM 5070 / NBRC 14893 / NCIMB 12804 / NRRL 8165 / MA-4680)).